The following is a 418-amino-acid chain: Actin-related protein 3 (418 aa).

Ala2 is subject to N-acetylalanine.

The protein belongs to the actin family. ARP3 subfamily. In terms of assembly, component of the Arp2/3 complex composed of ACTR2/ARP2, ACTR3/ARP3, ARPC1B/p41-ARC, ARPC2/p34-ARC, ARPC3/p21-ARC, ARPC4/p20-ARC and ARPC5/p16-ARC. Detected in fibroblasts.

It is found in the cytoplasm. The protein localises to the cytoskeleton. It localises to the cell projection. Its subcellular location is the nucleus. Its function is as follows. ATP-binding component of the Arp2/3 complex, a multiprotein complex that mediates actin polymerization upon stimulation by nucleation-promoting factor (NPF). The Arp2/3 complex mediates the formation of branched actin networks in the cytoplasm, providing the force for cell motility. Seems to contact the pointed end of the daughter actin filament. In addition to its role in the cytoplasmic cytoskeleton, the Arp2/3 complex also promotes actin polymerization in the nucleus, thereby regulating gene transcription and repair of damaged DNA. The Arp2/3 complex promotes homologous recombination (HR) repair in response to DNA damage by promoting nuclear actin polymerization, leading to drive motility of double-strand breaks (DSBs). This chain is Actin-related protein 3 (ACTR3), found in Gallus gallus (Chicken).